The primary structure comprises 469 residues: ATP-dependent protease ATPase subunit HslU (469 aa).

Residues Ile-24 and 66 to 71 (GVGKTE) contribute to the ATP site. The tract at residues 159–179 (LFGSMNQPDEPAEEEVDQELK) is disordered. ATP-binding residues include Asp-282, Glu-347, and Arg-419.

Belongs to the ClpX chaperone family. HslU subfamily. A double ring-shaped homohexamer of HslV is capped on each side by a ring-shaped HslU homohexamer. The assembly of the HslU/HslV complex is dependent on binding of ATP.

The protein localises to the cytoplasm. ATPase subunit of a proteasome-like degradation complex; this subunit has chaperone activity. The binding of ATP and its subsequent hydrolysis by HslU are essential for unfolding of protein substrates subsequently hydrolyzed by HslV. HslU recognizes the N-terminal part of its protein substrates and unfolds these before they are guided to HslV for hydrolysis. In Listeria innocua serovar 6a (strain ATCC BAA-680 / CLIP 11262), this protein is ATP-dependent protease ATPase subunit HslU.